Reading from the N-terminus, the 836-residue chain is Zinc fingers and homeoboxes protein 2 (836 aa).

Residues leucine 24 to serine 58 form a disordered region. The interaction with EFNB1 stretch occupies residues alanine 27–glycine 77. Residues valine 42–serine 58 show a composition bias toward basic and acidic residues. 2 consecutive C2H2-type zinc fingers follow at residues tyrosine 78–histidine 101 and tyrosine 110–histidine 133. The interval serine 168–asparagine 210 is disordered. Basic and acidic residues predominate over residues glutamine 192–asparagine 210. The tract at residues aspartate 195–serine 358 is required for homodimerization. DNA-binding regions (homeobox) lie at residues asparagine 263–glutamate 324, threonine 439–isoleucine 501, alanine 530–valine 591, and serine 628–tryptophan 690. The segment at asparagine 263 to lysine 446 is required for repressor activity. The required for interaction with NFYA stretch occupies residues asparagine 263–glycine 497. Residues histidine 317–lysine 446 form a required for nuclear localization region. A disordered region spans residues glycine 404–serine 442. A Glycyl lysine isopeptide (Lys-Gly) (interchain with G-Cter in SUMO2) cross-link involves residue lysine 455. 2 stretches are compositionally biased toward basic and acidic residues: residues serine 700–serine 709 and tyrosine 730–valine 746. The segment at serine 700–alanine 836 is disordered. Phosphoserine is present on residues serine 824 and serine 826.

The protein belongs to the ZHX family. Homodimer (via homeobox domain 1). Heterodimer with ZHX1 (via homeobox domain 1). Heterodimer with ZHX3 (via homeobox domain 1). Heterodimerization with ZHX1 is not necessary for repressor activity. Interacts (via homeobox domain) with NFYA (via N-terminus). Interacts with EFNB1 intracellular domain peptide; the interaction enhances ZHX2 transcriptional repression activity.

Its subcellular location is the nucleus. Its function is as follows. Acts as a transcriptional repressor. Represses the promoter activity of the CDC25C gene stimulated by NFYA. May play a role in retinal development where it regulates the composition of bipolar cell populations, by promoting differentiation of bipolar OFF-type cells. In the brain, may promote maintenance and suppress differentiation of neural progenitor cells in the developing cortex. In Rattus norvegicus (Rat), this protein is Zinc fingers and homeoboxes protein 2 (Zhx2).